The chain runs to 288 residues: Histone H3-like centromeric protein hcp-3 (288 aa).

The segment at 96–194 (YHARKEQARR…VTKTRRYRPG (99 aa)) is disordered. Residues 178-193 (MRAGRNRVTKTRRYRP) show a composition bias toward basic residues. The segment at 191–288 (YRPGQKALEE…LYRRLCLRHL (98 aa)) is H3-like.

Belongs to the histone H3 family. Forms a nucleosome-like histone octamer containing two molecules each of H2A, H2B, hcp-3 and H4 assembled in one hcp-3-H4 heterotetramer and two H2A-H2B heterodimers. The hcp-3-H4 heterotetramer is more compact and structurally more rigid than corresponding H3-H4 heterotetramers. Interacts with knl-2. Interacts with lin-53.

The protein localises to the nucleus. It localises to the chromosome. It is found in the centromere. Its subcellular location is the kinetochore. Histone H3-like variant which exclusively replaces conventional H3 in the nucleosome core of centromeric chromatin at the inner plate of the kinetochore. Required for recruitment and assembly of kinetochore proteins, mitotic progression and chromosome segregation. May serve as an epigenetic mark that propagates centromere identity through replication and cell division. Might promote cleavage furrow stability during cytokinesis. Not required for chromosome segregation during meiosis. The protein is Histone H3-like centromeric protein hcp-3 of Caenorhabditis elegans.